Here is a 328-residue protein sequence, read N- to C-terminus: Probable cell division protein WhiA (328 aa).

A DNA-binding region (H-T-H motif) is located at residues 275 to 308 (SLEELGRLAEPPMTKDAVAGRIRRLLSMADKRAE).

It belongs to the WhiA family.

Involved in cell division and chromosome segregation. In Corynebacterium jeikeium (strain K411), this protein is Probable cell division protein WhiA.